A 167-amino-acid polypeptide reads, in one-letter code: UPF0114 protein in repA1-repA2 intergenic region (167 aa).

The next 3 membrane-spanning stretches (helical) occupy residues Leu15 to Phe35, Leu53 to Val73, and Ile136 to Ile156.

The protein belongs to the UPF0114 family.

The protein resides in the cell membrane. The protein is UPF0114 protein in repA1-repA2 intergenic region of Buchnera aphidicola subsp. Pterocomma populeum.